The chain runs to 786 residues: E3 ubiquitin-protein ligase UHRF1 (786 aa).

Residues 1–78 enclose the Ubiquitin-like domain; the sequence is MWIQVRTMDG…IQLLVRQSLV (78 aa). Phosphoserine is present on residues Ser76, Ser98, and Ser102. The interval 82-134 is disordered; it reads PVPSSSGGSKERDSELSDTDSGCGLAQSESDKSSNSGEAANEPEGKADEDECD. Tudor-like regions lie at residues 139–213 and 220–287; these read GLYK…ARAR and DLQV…IERP. A Glycyl lysine isopeptide (Lys-Gly) (interchain with G-Cter in SUMO2) cross-link involves residue Lys283. A linker region spans residues 300 to 305; the sequence is RKSGPS. Ser302 bears the Phosphoserine; by PKA mark. The segment at 303 to 370 adopts a PHD-type zinc-finger fold; the sequence is GPSCKHCKDD…EWYCPDCRID (68 aa). 2 histone H3R2me0 binding regions span residues 337-341 and 357-359; these read CDECD and PPE. Residue Ser372 is modified to Phosphoserine. Lys389 participates in a covalent cross-link: Glycyl lysine isopeptide (Lys-Gly) (interchain with G-Cter in SUMO2). Position 403 is an N6-acetyllysine (Lys403). One can recognise a YDG domain in the interval 423–586; it reads GPIPGIPVGT…FLVWRFLLRR (164 aa). The segment at 449 to 450 is required to promote base flipping; the sequence is HV. DNA is bound by residues 467-468 and Asp473; that span reads AG. Required for formation of a 5-methylcytosine-binding pocket regions lie at residues 470-473 and 482-485; these read YEDD and YTGS. Position 550 is an N6-acetyllysine; alternate (Lys550). Lys550 is covalently cross-linked (Glycyl lysine isopeptide (Lys-Gly) (interchain with G-Cter in SUMO2); alternate). The disordered stretch occupies residues 626–679; that stretch reads NSKQAALDKEEEDGEEGFTSPRKGKRKSKSAGGDGSSRGTPKKTKVEPYSLTTQ. Ser645 carries the phosphoserine; by CDK1 modification. A phosphoserine mark is found at Ser655 and Ser662. Lys670 participates in a covalent cross-link: Glycyl lysine isopeptide (Lys-Gly) (interchain with G-Cter in SUMO2). The RING-type zinc-finger motif lies at 717-756; that stretch reads CICCQELVFRPITTVCQHNVCKDCLDRSFKAQVFSCPACR.

Interacts with DNMT3A and DNMT3B. Interacts with DNMT1; the interaction is direct. Interacts with USP7; leading to its deubiquitination. Interacts with histone H3. Interacts with HDAC1, but not with HDAC2. Interacts with BLTP3A. Interacts with PML. Interacts with EHMT2. Binds methylated CpG containing oligonucleotides. Interacts with ZNF263; recruited to the SIX3 promoter along with other proteins involved in chromatin modification and transcriptional corepression where it contributes to transcriptional repression. Interacts with UHRF2. Interacts with FANCD2. Interacts with TET1 isoform 2; this interaction induces the recruitment of TET1 isoform 2 to replicating heterochromatin. In terms of processing, phosphorylation at Ser-302 of the linker region decreases the binding to H3K9me3. Phosphorylation at Ser-645 by CDK1 during M phase impairs interaction with USP7, preventing deubiquitination and leading to degradation by the proteasome. Ubiquitinated; which leads to proteasomal degradation. Autoubiquitinated; interaction with USP7 leads to deubiquitination and prevents degradation. Ubiquitination and degradation takes place during M phase, when phosphorylation at Ser-645 prevents interaction with USP7 and subsequent deubiquitination. Polyubiquitination may be stimulated by DNA damage.

It is found in the nucleus. It catalyses the reaction S-ubiquitinyl-[E2 ubiquitin-conjugating enzyme]-L-cysteine + [acceptor protein]-L-lysine = [E2 ubiquitin-conjugating enzyme]-L-cysteine + N(6)-ubiquitinyl-[acceptor protein]-L-lysine.. It participates in protein modification; protein ubiquitination. Multidomain protein that acts as a key epigenetic regulator by bridging DNA methylation and chromatin modification. Specifically recognizes and binds hemimethylated DNA at replication forks via its YDG domain and recruits DNMT1 methyltransferase to ensure faithful propagation of the DNA methylation patterns through DNA replication. In addition to its role in maintenance of DNA methylation, also plays a key role in chromatin modification: through its tudor-like regions and PHD-type zinc fingers, specifically recognizes and binds histone H3 trimethylated at 'Lys-9' (H3K9me3) and unmethylated at 'Arg-2' (H3R2me0), respectively, and recruits chromatin proteins. Enriched in pericentric heterochromatin where it recruits different chromatin modifiers required for this chromatin replication. Also localizes to euchromatic regions where it negatively regulates transcription possibly by impacting DNA methylation and histone modifications. Has E3 ubiquitin-protein ligase activity by mediating the ubiquitination of target proteins such as histone H3 and PML. It is still unclear how E3 ubiquitin-protein ligase activity is related to its role in chromatin in vivo. Plays a role in DNA repair by cooperating with UHRF2 to ensure recruitment of FANCD2 to interstrand cross-links (ICLs) leading to FANCD2 activation. Plays a pivotal role in the establishment of correct spindle architecture by catalyzing the 'Lys-63'-linked ubiquitination of KIF11, thereby controlling KIF11 localization on the spindle. This chain is E3 ubiquitin-protein ligase UHRF1 (UHRF1), found in Bos taurus (Bovine).